A 192-amino-acid polypeptide reads, in one-letter code: MNFLLSWIHWGLAALLYFHNAKVLQAAPAQGDGDRQQGEVISFLTVYERSACRPVETMVDIFQEYPDEVEYIFKPSCVALMRCGGCCNDEALECVPTEVYNVTMEIMKLKPFQSQHIHPMSFQQHSKCECRPKKEVRIRQENHCEPCSERRKHLYKQDPLTCKCSCKFTDSRCKSKQLELNERTCRCEKPRR.

The N-terminal stretch at 1 to 26 (MNFLLSWIHWGLAALLYFHNAKVLQA) is a signal peptide. Cystine bridges form between Cys52–Cys94, Cys83–Cys128, and Cys87–Cys130. Asn101 carries N-linked (GlcNAc...) asparagine glycosylation.

It belongs to the PDGF/VEGF growth factor family. Homodimer; disulfide-linked. Also found as heterodimer with PGF Interacts with FLT1/VEGFR1 and KDR/VEGFR2 receptors, heparan sulfate and heparin. In terms of tissue distribution, expressed by the venom gland, and probably other tissues.

The protein resides in the secreted. Functionally, growth factor active in angiogenesis, vasculogenesis and endothelial cell growth. Induces endothelial cell proliferation, promotes cell migration, inhibits apoptosis and induces permeabilization of blood vessels. The polypeptide is Vascular endothelial growth factor A (Vipera ammodytes ammodytes (Western sand viper)).